Reading from the N-terminus, the 288-residue chain is Histone-lysine N-methyltransferase Suv4-20 (288 aa).

Residues 128–238 (QECKRYSQEG…PGDEITCFYG (111 aa)) form the SET domain.

It belongs to the class V-like SAM-binding methyltransferase superfamily. Histone-lysine methyltransferase family. Suvar4-20 subfamily.

Its subcellular location is the nucleus. The protein resides in the chromosome. The catalysed reaction is N(6)-methyl-L-lysyl(20)-[histone H4] + S-adenosyl-L-methionine = N(6),N(6)-dimethyl-L-lysyl(20)-[histone H4] + S-adenosyl-L-homocysteine + H(+). It catalyses the reaction N(6),N(6)-dimethyl-L-lysyl(20)-[histone H4] + S-adenosyl-L-methionine = N(6),N(6),N(6)-trimethyl-L-lysyl(20)-[histone H4] + S-adenosyl-L-homocysteine + H(+). In terms of biological role, histone methyltransferase that specifically di- and trimethylates 'Lys-20' of histone H4 (H4K20me2/me3). H4 'Lys-20' trimethylation represents a specific tag for epigenetic transcriptional repression. Contributes to dosage compensation of X chromosome-relative to autosome-linked gene expression, possibly by converting H4K20me1 to H4K20m2/me3 on autosomes. Involved in the regulation of growth and body fat metabolism downstream of the TOR complex 2 pathway. The sequence is that of Histone-lysine N-methyltransferase Suv4-20 (set-4) from Caenorhabditis elegans.